The following is a 521-amino-acid chain: Lysine--tRNA ligase (521 aa).

The short motif at Pro32–Asn40 is the 'HIGH' region element. The short motif at Lys280–Ser284 is the 'KMSKS' region element.

It belongs to the class-I aminoacyl-tRNA synthetase family.

The protein resides in the cytoplasm. It carries out the reaction tRNA(Lys) + L-lysine + ATP = L-lysyl-tRNA(Lys) + AMP + diphosphate. In Borreliella burgdorferi (strain ATCC 35210 / DSM 4680 / CIP 102532 / B31) (Borrelia burgdorferi), this protein is Lysine--tRNA ligase (lysS).